The chain runs to 231 residues: Large ribosomal subunit protein uL1 (231 aa).

Belongs to the universal ribosomal protein uL1 family. In terms of assembly, part of the 50S ribosomal subunit.

Binds directly to 23S rRNA. The L1 stalk is quite mobile in the ribosome, and is involved in E site tRNA release. Its function is as follows. Protein L1 is also a translational repressor protein, it controls the translation of the L11 operon by binding to its mRNA. The polypeptide is Large ribosomal subunit protein uL1 (Halalkalibacterium halodurans (strain ATCC BAA-125 / DSM 18197 / FERM 7344 / JCM 9153 / C-125) (Bacillus halodurans)).